A 236-amino-acid polypeptide reads, in one-letter code: Small ribosomal subunit protein eS6 (236 aa).

Phosphoserine is present on residues serine 232 and serine 233.

This sequence belongs to the eukaryotic ribosomal protein eS6 family. In terms of processing, phosphorylated.

In Debaryomyces hansenii (strain ATCC 36239 / CBS 767 / BCRC 21394 / JCM 1990 / NBRC 0083 / IGC 2968) (Yeast), this protein is Small ribosomal subunit protein eS6 (RPS6).